Reading from the N-terminus, the 236-residue chain is 7-cyano-7-deazaguanine synthase (236 aa).

7-17 (CSGGLDSVSLA) contributes to the ATP binding site. Cys-185, Cys-193, Cys-196, and Cys-199 together coordinate Zn(2+).

The protein belongs to the QueC family. Zn(2+) serves as cofactor.

It catalyses the reaction 7-carboxy-7-deazaguanine + NH4(+) + ATP = 7-cyano-7-deazaguanine + ADP + phosphate + H2O + H(+). Its pathway is purine metabolism; 7-cyano-7-deazaguanine biosynthesis. Functionally, catalyzes the ATP-dependent conversion of 7-carboxy-7-deazaguanine (CDG) to 7-cyano-7-deazaguanine (preQ(0)). The protein is 7-cyano-7-deazaguanine synthase of Agrobacterium fabrum (strain C58 / ATCC 33970) (Agrobacterium tumefaciens (strain C58)).